The following is a 320-amino-acid chain: MTYQNGVEVLLEEFLDYLTKEETICSLEIEKLKVSIDELEKETDEPRVLQGINYFRTAKEVYQLSRKAYETKEEVVSEALILWIYENLWKGFNVPKGYRKSDMVIFGAKFSPPPPYVVPNLIRTIVNWLRNEKTIDVVKKSIIFHTLFEVIHPFPDGNGRVGRILLNAILVENGLLNVAFRNREKYISALREAEEGAIVVVEKLSRGRKIDYSSITETVEYYGNLNVFDELIRTEMMHSLKVYSNIKQVFLTPEEAAKLLGLKNKDYVRVLIHRGKLKAVKEEGKWKIPLSEVVKNFEHKLKGEEFKLANNLFKGKLSPS.

The Fido domain occupies 76 to 206 (VSEALILWIY…AIVVVEKLSR (131 aa)). Residues 100–101 (KS), 157–159 (GNG), and R163 contribute to the ATP site.

It belongs to the fic family.

It carries out the reaction L-tyrosyl-[protein] + ATP = O-(5'-adenylyl)-L-tyrosyl-[protein] + diphosphate. The enzyme catalyses L-threonyl-[protein] + ATP = 3-O-(5'-adenylyl)-L-threonyl-[protein] + diphosphate. Probable adenylyltransferase that mediates the addition of adenosine 5'-monophosphate (AMP) to specific residues of target proteins. The protein is Probable protein adenylyltransferase aq_aa38 of Aquifex aeolicus (strain VF5).